A 250-amino-acid chain; its full sequence is Flavin-dependent thymidylate synthase (250 aa).

A ThyX domain is found at 7 to 233; that stretch reads LRVQLIAKTE…PQVFSDFEIV (227 aa). FAD-binding positions include Ser-71, 95–97, and Gln-103; that span reads RHR. DUMP contacts are provided by residues 92-95, 103-107, and Arg-172; these read ELIR and QLSQR. The short motif at 95–105 is the ThyX motif element; the sequence is RHRHFSYSQLS. FAD contacts are provided by residues 188-190 and His-194; that span reads NYR. Residue Arg-199 participates in dUMP binding. The Involved in ionization of N3 of dUMP, leading to its activation role is filled by Arg-199.

It belongs to the thymidylate synthase ThyX family. In terms of assembly, homotetramer. FAD is required as a cofactor.

The enzyme catalyses dUMP + (6R)-5,10-methylene-5,6,7,8-tetrahydrofolate + NADPH + H(+) = dTMP + (6S)-5,6,7,8-tetrahydrofolate + NADP(+). The protein operates within pyrimidine metabolism; dTTP biosynthesis. Catalyzes the reductive methylation of 2'-deoxyuridine-5'-monophosphate (dUMP) to 2'-deoxythymidine-5'-monophosphate (dTMP) while utilizing 5,10-methylenetetrahydrofolate (mTHF) as the methyl donor, and NADPH and FADH(2) as the reductant. The sequence is that of Flavin-dependent thymidylate synthase from Mycolicibacterium vanbaalenii (strain DSM 7251 / JCM 13017 / BCRC 16820 / KCTC 9966 / NRRL B-24157 / PYR-1) (Mycobacterium vanbaalenii).